Reading from the N-terminus, the 313-residue chain is Homoserine O-succinyltransferase (313 aa).

Cys142 functions as the Acyl-thioester intermediate in the catalytic mechanism. Lys163 and Ser192 together coordinate substrate. His235 acts as the Proton acceptor in catalysis. Glu237 is a catalytic residue. Arg249 contributes to the substrate binding site.

The protein belongs to the MetA family.

The protein resides in the cytoplasm. It catalyses the reaction L-homoserine + succinyl-CoA = O-succinyl-L-homoserine + CoA. It participates in amino-acid biosynthesis; L-methionine biosynthesis via de novo pathway; O-succinyl-L-homoserine from L-homoserine: step 1/1. Functionally, transfers a succinyl group from succinyl-CoA to L-homoserine, forming succinyl-L-homoserine. The sequence is that of Homoserine O-succinyltransferase from Shewanella baltica (strain OS195).